Consider the following 55-residue polypeptide: Spermatid nuclear transition protein 1 (55 aa).

Over residues 1-42 (MSTSRKLKSHGMRRGKNRAPHKGVKRGGSKRKYRKGSLKSRK) the composition is skewed to basic residues. The tract at residues 1-55 (MSTSRKLKSHGMRRGKNRAPHKGVKRGGSKRKYRKGSLKSRKRCDDANRNYRSHL) is disordered. A phosphoserine mark is found at Ser9, Ser37, and Ser40.

Belongs to the nuclear transition protein 1 family. As to expression, testis.

The protein resides in the nucleus. It is found in the chromosome. Functionally, plays a key role in the replacement of histones to protamine in the elongating spermatids of mammals. In condensing spermatids, loaded onto the nucleosomes, where it promotes the recruitment and processing of protamines, which are responsible for histone eviction. The protein is Spermatid nuclear transition protein 1 (TNP1) of Sus scrofa (Pig).